The chain runs to 247 residues: ATP synthase subunit a (247 aa).

The next 6 helical transmembrane spans lie at 24 to 44, 82 to 102, 112 to 132, 141 to 161, 181 to 201, and 206 to 226; these read IAFT…AAMM, FFPL…VGII, IIVT…YGFY, LFVP…IEII, GHVT…LGFV, and ALLP…VAFL.

This sequence belongs to the ATPase A chain family. As to quaternary structure, F-type ATPases have 2 components, CF(1) - the catalytic core - and CF(0) - the membrane proton channel. CF(1) has five subunits: alpha(3), beta(3), gamma(1), delta(1), epsilon(1). CF(0) has four main subunits: a, b, b' and c.

The protein resides in the cell inner membrane. Functionally, key component of the proton channel; it plays a direct role in the translocation of protons across the membrane. This Bradyrhizobium sp. (strain ORS 278) protein is ATP synthase subunit a.